The primary structure comprises 640 residues: Guanylate-binding protein 4 (640 aa).

Positions 1–325 (MGERTLHAAV…DAINSGAVPC (325 aa)) are GTPase domain (Globular). A GB1/RHD3-type G domain is found at 50 to 292 (SQPVVVVAIV…FCSYIFTHAK (243 aa)). Residues 60-67 (GLYRTGKS), 82-84 (LGS), and 112-116 (DTEGL) each bind GTP. Residues 499–612 (GEKAIAAERA…EQLRLLKILD (114 aa)) are a coiled coil.

This sequence belongs to the TRAFAC class dynamin-like GTPase superfamily. GB1/RHD3 GTPase family. GB1 subfamily. Heterodimer with other family members, including GBP1, GBP2 and GBP5. Dimerization regulates subcellular location. Interacts with IRF7; preventing interaction between TRAF6 and IRF7, resulting in impaired TRAF6-mediated IRF7 ubiquitination. (Microbial infection) Ubiquitinated by S.flexneri IpaH9.8, leading to its degradation by the proteasome, thereby preventing its ability to promote host defense against bacterial infection.

It localises to the golgi apparatus membrane. It is found in the cytoplasm. The protein resides in the nucleus. Its subcellular location is the perinuclear region. The catalysed reaction is GTP + H2O = GDP + phosphate + H(+). Interferon (IFN)-inducible GTPase that plays important roles in innate immunity against a diverse range of bacterial, viral and protozoan pathogens. Negatively regulates the antiviral response by inhibiting activation of IRF7 transcription factor. The polypeptide is Guanylate-binding protein 4 (Homo sapiens (Human)).